Here is a 514-residue protein sequence, read N- to C-terminus: MNILKSLISVGIMTLISRIFGFFRDVLIAHIFGASMFTDAFFIAFKIPNLLRRIFAEGAFYQSFIPILIDYKSRKDKEYIQEFIRSTCGFTILVLTTFVILGIIFSDYIIFISAPGFSESSKKLQLASNLLKIMFPYILFISLSSLCSSILNSYNYFFIPSLSSSLLNISIIVFSFFFSDYFEPSIISLAWSVMIGGFFQLFYQFPHLYKIKMLVFPKINFKNIGLIKVLKKMGPSTLGSCANQISLIFNTIFSSLLHSGSISWIYYADRLIEFPIGIIGVSLSTILFTSFSCSYSNNTQSEYKILLNWGIRFGLILSLPISVILFMFSKPLVIILFQYGKFTDFDVLMTQKALELYSFGLVSFILVKILVSAFYSCQEVNIPMRISILTLFLTQLMNPFLIFYFQHSGLALSCSIASWINFFLLYWKLYQKGIINFKLNDFIFIFRLLIAVLVMTFFLIFMLYFIPSWKIGSFFDKIIRLFTILSISGIVYLIALHFLGIRLLNYSDKLFQKK.

Transmembrane regions (helical) follow at residues isoleucine 3–phenylalanine 23, aspartate 25–phenylalanine 45, isoleucine 92–isoleucine 112, leucine 130–isoleucine 150, phenylalanine 157–phenylalanine 177, isoleucine 186–proline 206, isoleucine 245–isoleucine 265, leucine 271–phenylalanine 291, leucine 315–isoleucine 335, leucine 354–phenylalanine 374, isoleucine 386–glutamine 406, glycine 409–leucine 429, leucine 448–serine 468, and leucine 481–isoleucine 501.

This sequence belongs to the MurJ/MviN family.

It is found in the cell inner membrane. The protein operates within cell wall biogenesis; peptidoglycan biosynthesis. In terms of biological role, involved in peptidoglycan biosynthesis. Transports lipid-linked peptidoglycan precursors from the inner to the outer leaflet of the cytoplasmic membrane. In Buchnera aphidicola subsp. Schizaphis graminum (strain Sg), this protein is Probable lipid II flippase MurJ.